The chain runs to 352 residues: UDP-3-O-acylglucosamine N-acyltransferase (352 aa).

Histidine 244 functions as the Proton acceptor in the catalytic mechanism.

This sequence belongs to the transferase hexapeptide repeat family. LpxD subfamily. As to quaternary structure, homotrimer.

The enzyme catalyses a UDP-3-O-[(3R)-3-hydroxyacyl]-alpha-D-glucosamine + a (3R)-hydroxyacyl-[ACP] = a UDP-2-N,3-O-bis[(3R)-3-hydroxyacyl]-alpha-D-glucosamine + holo-[ACP] + H(+). The protein operates within bacterial outer membrane biogenesis; LPS lipid A biosynthesis. Functionally, catalyzes the N-acylation of UDP-3-O-acylglucosamine using 3-hydroxyacyl-ACP as the acyl donor. Is involved in the biosynthesis of lipid A, a phosphorylated glycolipid that anchors the lipopolysaccharide to the outer membrane of the cell. The sequence is that of UDP-3-O-acylglucosamine N-acyltransferase from Anaeromyxobacter sp. (strain Fw109-5).